Reading from the N-terminus, the 241-residue chain is uncharacterized protein (241 aa).

This is an uncharacterized protein from Ictaluridae (bullhead catfishes).